A 291-amino-acid polypeptide reads, in one-letter code: tRNA U34 carboxymethyltransferase (291 aa).

Carboxy-S-adenosyl-L-methionine-binding positions include Lys-61, Trp-75, Lys-80, Gly-100, 122–124 (DPS), 149–150 (VE), Tyr-169, and Arg-284.

It belongs to the class I-like SAM-binding methyltransferase superfamily. CmoB family. Homotetramer.

It carries out the reaction carboxy-S-adenosyl-L-methionine + 5-hydroxyuridine(34) in tRNA = 5-carboxymethoxyuridine(34) in tRNA + S-adenosyl-L-homocysteine + H(+). Catalyzes carboxymethyl transfer from carboxy-S-adenosyl-L-methionine (Cx-SAM) to 5-hydroxyuridine (ho5U) to form 5-carboxymethoxyuridine (cmo5U) at position 34 in tRNAs. The chain is tRNA U34 carboxymethyltransferase from Campylobacter jejuni subsp. doylei (strain ATCC BAA-1458 / RM4099 / 269.97).